A 170-amino-acid chain; its full sequence is Cathelicidin antimicrobial peptide (170 aa).

A signal peptide spans 1 to 30; the sequence is MKTQRDGHSLGGWSLMLLLLGLLMPLAIVA. Positions 31–131 are cleaved as a propeptide — cathelin-like domain (CLD); sequence QVLSYKEAVL…DISCDKDNRR (101 aa). 2 disulfide bridges follow: C86–C97 and C108–C125. The active core stretch occupies residues 150–162; the sequence is FKRIVQRIKDFLQ.

It belongs to the cathelicidin family. Monomer, homodimer or homotrimer (in vitro). Oligomerizes as tetra- or hexamer in solution (in vitro). In terms of processing, proteolytically cleaved by proteinase PRTN3 into antibacterial peptide LL-37. Proteolytically cleaved by cathepsin CTSG and neutrophil elastase ELANE. Resistant to proteolytic degradation in solution, and when bound to both zwitterionic (mimicking mammalian membranes) and negatively charged membranes (mimicking bacterial membranes). Post-translationally, after secretion onto the skin surface, the CAMP gene product is processed by a serine protease-dependent mechanism into multiple novel antimicrobial peptides distinct from and shorter than cathelicidin LL-37. These peptides show enhanced antimicrobial action, acquiring the ability to kill skin pathogens such as S.aureus, E.coli and C.albicans. These peptides have lost the ability to stimulate CXCL8/IL8 release from keratinocytes. The peptides act synergistically, killing bacteria at lower concentrations when present together, and maintain activity at increased salt condition.

The protein resides in the secreted. It is found in the vesicle. Antimicrobial protein that is an integral component of the innate immune system. Binds to bacterial lipopolysaccharides (LPS). Acts via neutrophil N-formyl peptide receptors to enhance the release of CXCL2. Postsecretory processing generates multiple cathelicidin antimicrobial peptides with various lengths which act as a topical antimicrobial defense in sweat on skin. The unprocessed precursor form, cathelicidin antimicrobial peptide, inhibits the growth of Gram-negative E.coli and E.aerogenes with efficiencies comparable to that of the mature peptide LL-37 (in vitro). Its function is as follows. Antimicrobial peptide that is an integral component of the innate immune system. Binds to bacterial lipopolysaccharides (LPS). Causes membrane permeabilization by forming transmembrane pores (in vitro). Causes lysis of E.coli. Exhibits antimicrobial activity against Gram-negative bacteria such as P.aeruginosa, S.typhimurium, E.aerogenes, E.coli and P.syringae, Gram-positive bacteria such as L.monocytogenes, S.epidermidis, S.pyogenes and S.aureus, as well as vancomycin-resistant enterococci (in vitro). Exhibits antimicrobial activity against methicillin-resistant S.aureus, P.mirabilis, and C.albicans in low-salt media, but not in media containing 100 mM NaCl (in vitro). Forms chiral supramolecular assemblies with quinolone signal (PQS) molecules of P.aeruginosa, which may lead to interference of bacterial quorum signaling and perturbance of bacterial biofilm formation. May form supramolecular fiber-like assemblies on bacterial membranes. Induces cytokine and chemokine producation as well as TNF/TNFA and CSF2/GMCSF production in normal human keratinocytes. Exhibits hemolytic activity against red blood cells. In terms of biological role, exhibits antimicrobial activity against E.coli and B.megaterium (in vitro). This Hylobates moloch (Silvery gibbon) protein is Cathelicidin antimicrobial peptide.